The primary structure comprises 170 residues: tRNA-splicing endonuclease (170 aa).

Active-site residues include tyrosine 106, histidine 116, and lysine 147.

This sequence belongs to the tRNA-intron endonuclease family. Archaeal short subfamily. As to quaternary structure, homotetramer; although the tetramer contains four active sites, only two participate in the cleavage. Therefore, it should be considered as a dimer of dimers.

The enzyme catalyses pretRNA = a 3'-half-tRNA molecule with a 5'-OH end + a 5'-half-tRNA molecule with a 2',3'-cyclic phosphate end + an intron with a 2',3'-cyclic phosphate and a 5'-hydroxyl terminus.. Functionally, endonuclease that removes tRNA introns. Cleaves pre-tRNA at the 5'- and 3'-splice sites to release the intron. The products are an intron and two tRNA half-molecules bearing 2',3' cyclic phosphate and 5'-OH termini. Recognizes a pseudosymmetric substrate in which 2 bulged loops of 3 bases are separated by a stem of 4 bp. The sequence is that of tRNA-splicing endonuclease from Methanothermobacter thermautotrophicus (strain ATCC 29096 / DSM 1053 / JCM 10044 / NBRC 100330 / Delta H) (Methanobacterium thermoautotrophicum).